The sequence spans 127 residues: UPF0325 protein ASA_3165 (127 aa).

This sequence belongs to the UPF0325 family.

The chain is UPF0325 protein ASA_3165 from Aeromonas salmonicida (strain A449).